Here is a 41-residue protein sequence, read N- to C-terminus: Large ribosomal subunit protein bL36 (41 aa).

The protein belongs to the bacterial ribosomal protein bL36 family.

This is Large ribosomal subunit protein bL36 from Neisseria gonorrhoeae (strain ATCC 700825 / FA 1090).